The sequence spans 308 residues: Probable manganese-dependent inorganic pyrophosphatase (308 aa).

Mn(2+) contacts are provided by histidine 9, aspartate 13, aspartate 15, aspartate 75, histidine 97, and aspartate 149.

The protein belongs to the PPase class C family. Mn(2+) is required as a cofactor.

The protein resides in the cytoplasm. The catalysed reaction is diphosphate + H2O = 2 phosphate + H(+). In Listeria monocytogenes serotype 4a (strain HCC23), this protein is Probable manganese-dependent inorganic pyrophosphatase.